A 39-amino-acid chain; its full sequence is Cygnin (39 aa).

Glutamine 1 bears the Pyrrolidone carboxylic acid mark. 3 disulfides stabilise this stretch: cysteine 6–cysteine 33, cysteine 12–cysteine 28, and cysteine 16–cysteine 32.

The protein belongs to the transferrin family.

The polypeptide is Cygnin (Cygnus atratus (Black swan)).